We begin with the raw amino-acid sequence, 174 residues long: Larval cuticle protein A1A (174 aa).

Repeat copies occupy residues 45-48 and 67-70. The Chitin-binding type R&amp;R domain occupies 84 to 150; it reads NPQYSFGYDV…AVVHREPLVA (67 aa). Residues 155–158 form repeat 3; sequence AAPA.

Component of the cuticle of the larva of Tenebrio molitor. The polypeptide is Larval cuticle protein A1A (Tenebrio molitor (Yellow mealworm beetle)).